We begin with the raw amino-acid sequence, 363 residues long: NAD(P)H-quinone oxidoreductase subunit 1, chloroplastic (363 aa).

8 consecutive transmembrane segments (helical) span residues 27 to 47 (LIPI…IVWL), 93 to 113 (WLFS…YLVV), 124 to 144 (LGVG…GLLM), 162 to 182 (AAQA…VALL), 200 to 220 (ILGW…IASL), 250 to 270 (FGLF…FVSV), 303 to 323 (ATLG…LSIL), and 343 to 363 (FLLP…LALL).

The protein belongs to the complex I subunit 1 family. NDH is composed of at least 16 different subunits, 5 of which are encoded in the nucleus.

The protein localises to the plastid. Its subcellular location is the chloroplast thylakoid membrane. It catalyses the reaction a plastoquinone + NADH + (n+1) H(+)(in) = a plastoquinol + NAD(+) + n H(+)(out). The enzyme catalyses a plastoquinone + NADPH + (n+1) H(+)(in) = a plastoquinol + NADP(+) + n H(+)(out). Functionally, NDH shuttles electrons from NAD(P)H:plastoquinone, via FMN and iron-sulfur (Fe-S) centers, to quinones in the photosynthetic chain and possibly in a chloroplast respiratory chain. The immediate electron acceptor for the enzyme in this species is believed to be plastoquinone. Couples the redox reaction to proton translocation, and thus conserves the redox energy in a proton gradient. The protein is NAD(P)H-quinone oxidoreductase subunit 1, chloroplastic of Chaetosphaeridium globosum (Charophycean green alga).